A 1235-amino-acid polypeptide reads, in one-letter code: MLFVFILLLPSCLGYIGDFRCIQTVNYNGNNASAPSISTEAVDVSKGRGTYYVLDRVYLNATLLLTGYYPVDGSNYRNLALTGTNTLSLTWFKPPFLSEFNDGIFAKVQNLKTNTPTGATSYFPTIVIGSLFGNTSYTVVLEPYNNIIMASVCTYTICQLPYTPCKPNTNGNRVIGFWHTDVKPPICLLKRNFTFNVNAPWLYFHFYQQGGTFYAYYADKPSATTFLFSVYIGDILTQYFVLPFICTPTAGSTLAPLYWVTPLLKRQYLFNFNEKGVITSAVDCASSYISEIKCKTQSLLPSTGVYDLSGYTVQPVGVVYRRVPNLPDCKIEEWLTAKSVPSPLNWERRTFQNCNFNLSSLLRYVQAESLSCNNIDASKVYGMCFGSVSVDKFAIPRSRQIDLQIGNSGFLQTANYKIDTAATSCQLYYSLPKNNVTINNYNPSSWNRRYGFKVNDRCQIFANILLNGINSGTTCSTDLQLPNTEVATGVCVRYDLYGITGQGVFKEVKADYYNSWQALLYDVNGNLNGFRDLTTNKTYTIRSCYSGRVSAAYHKEAPEPALLYRNINCSYVFTNNISREENPLNYFDSYLGCVVNADNRTDEALPNCNLRMGAGLCVDYSKSRRARRSVSTGYRLTTFEPYMPMLVNDSVQSVGGLYEMQIPTNFTIGHHEEFIQIRAPKVTIDCAAFVCGDNAACRQQLVEYGSFCDNVNAILNEVNNLLDNMQLQVASALMQGVTISSRLPDGISGPIDDINFSPLLGCIGSTCAEDGNGPSAIRGRSAIEDLLFDKVKLSDVGFVEAYNNCTGGQEVRDLLCVQSFNGIKVLPPVLSESQISGYTAGATAAAMFPPWTAAAGVPFSLNVQYRINGLGVTMNVLSENQKMIASAFNNALGAIQEGFDATNSALGKIQSVVNANAEALNNLLNQLSNRFGAISASLQEILTRLDAVEAKAQIDRLINGRLTALNAYISKQLSDSTLIKFSAAQAIEKVNECVKSQTTRINFCGNGNHILSLVQNAPYGLCFIHFSYVPTSFKTANVSPGLCISGDRGLAPKAGYFVQDNGEWKFTGSNYYYPEPITDKNSVAMISCAVNYTKAPEVFLNNSIPNLPDFKEELDKWFKNQTSIAPDLSLDFEKLNVTFLDLTYEMNRIQDAIKKLNESYINLKEVGTYEMYVKWPWYVWLLIGLAGVAVCVLLFFICCCTGCGSCCFRKCGSCCDEYGGHQDSIVIHNISAHED.

The signal sequence occupies residues 1–13 (MLFVFILLLPSCL). Residues 1–330 (MLFVFILLLP…RRVPNLPDCK (330 aa)) form a receptor binding site region. Topologically, residues 14-1176 (GYIGDFRCIQ…GTYEMYVKWP (1163 aa)) are extracellular. Residues 15 to 296 (YIGDFRCIQT…SYISEIKCKT (282 aa)) enclose the BetaCoV S1-NTD domain. 5 cysteine pairs are disulfide-bonded: C21–C158, C153–C187, C165–C246, C284–C294, and C329–C354. Residues N31, N60, and N134 are each glycosylated (N-linked (GlcNAc...) asparagine; by host). The N-linked (GlcNAc...) asparagine; by host glycan is linked to N192. The BetaCoV S1-CTD domain occupies 327-477 (PDCKIEEWLT…GINSGTTCST (151 aa)). N-linked (GlcNAc...) asparagine; by host glycosylation is present at N357. Intrachain disulfides connect C372–C425 and C384–C475. N435, N536, N568, N576, N599, N648, and N665 each carry an N-linked (GlcNAc...) asparagine; by host glycan. Fusion peptide stretches follow at residues 781–802 (SAIE…VEAY) and 800–820 (EAYN…VQSF). The N-linked (GlcNAc...) asparagine; by host glycan is linked to N804. A disulfide bridge connects residues C805 and C816. A heptad repeat 1 region spans residues 881 to 931 (QKMIASAFNNALGAIQEGFDATNSALGKIQSVVNANAEALNNLLNQLSNRF). Residues 910–954 (QSVVNANAEALNNLLNQLSNRFGAISASLQEILTRLDAVEAKAQI) adopt a coiled-coil conformation. N1091, N1101, N1120, N1136, and N1157 each carry an N-linked (GlcNAc...) asparagine; by host glycan. Residues 1125–1165 (APDLSLDFEKLNVTFLDLTYEMNRIQDAIKKLNESYINLKE) are heptad repeat 2. Residues 1138 to 1166 (TFLDLTYEMNRIQDAIKKLNESYINLKEV) are a coiled coil. The helical transmembrane segment at 1177–1197 (WYVWLLIGLAGVAVCVLLFFI) threads the bilayer. Residues 1198–1235 (CCCTGCGSCCFRKCGSCCDEYGGHQDSIVIHNISAHED) are Cytoplasmic-facing. The KxHxx motif lies at 1231–1235 (SAHED).

This sequence belongs to the betacoronaviruses spike protein family. In terms of assembly, homotrimer; each monomer consists of a S1 and a S2 subunit. The resulting peplomers protrude from the virus surface as spikes. In terms of processing, specific enzymatic cleavages in vivo yield mature proteins. The precursor is processed into S1 and S2 by host cell furin or another cellular protease to yield the mature S1 and S2 proteins. Additionally, a second cleavage leads to the release of a fusion peptide after viral attachment to host cell receptor. Post-translationally, the cytoplasmic Cys-rich domain is palmitoylated. Spike glycoprotein is digested within host endosomes.

The protein localises to the virion membrane. The protein resides in the host endoplasmic reticulum-Golgi intermediate compartment membrane. It is found in the host cell membrane. Functionally, attaches the virion to the cell membrane by interacting with host receptor, initiating the infection. In terms of biological role, mediates fusion of the virion and cellular membranes by acting as a class I viral fusion protein. Under the current model, the protein has at least three conformational states: pre-fusion native state, pre-hairpin intermediate state, and post-fusion hairpin state. During viral and target cell membrane fusion, the coiled coil regions (heptad repeats) assume a trimer-of-hairpins structure, positioning the fusion peptide in close proximity to the C-terminal region of the ectodomain. The formation of this structure appears to drive apposition and subsequent fusion of viral and target cell membranes. Its function is as follows. Acts as a viral fusion peptide which is unmasked following S2 cleavage occurring upon virus endocytosis. The protein is Spike glycoprotein of Mus musculus (Mouse).